A 910-amino-acid chain; its full sequence is Periodic tryptophan protein 2 homolog (910 aa).

WD repeat units follow at residues 12 to 50, 53 to 92, 94 to 134, 144 to 183, 188 to 227, 271 to 310, 313 to 355, 358 to 397, 400 to 439, 443 to 485, 486 to 523, 525 to 563, 586 to 625, and 688 to 728; these read GTVY…SKTL, DCNY…KIYT, RSNK…KVYN, LSSD…NLFI, SHKG…GELV, GKSV…LVHN, VSEM…YVMK, AHSL…CTVT, EHTS…NFRT, PEPT…DILS, GHES…AETV, VSHE…NLGS, AKTK…ILKK, and RPEV…DPFQ. The segment at 867 to 910 is disordered; it reads SKKSVKKEEEEEEDVSDESDDEDIEDESAGSDDEDSDDSVEIIE. Residues 875 to 910 show a composition bias toward acidic residues; sequence EEEEEDVSDESDDEDIEDESAGSDDEDSDDSVEIIE.

Belongs to the WD repeat PWP2 family.

The polypeptide is Periodic tryptophan protein 2 homolog (Caenorhabditis elegans).